Reading from the N-terminus, the 311-residue chain is Methionyl-tRNA formyltransferase (311 aa).

Position 112–115 (112–115 (SLLP)) interacts with (6S)-5,6,7,8-tetrahydrofolate.

It belongs to the Fmt family.

It catalyses the reaction L-methionyl-tRNA(fMet) + (6R)-10-formyltetrahydrofolate = N-formyl-L-methionyl-tRNA(fMet) + (6S)-5,6,7,8-tetrahydrofolate + H(+). Functionally, attaches a formyl group to the free amino group of methionyl-tRNA(fMet). The formyl group appears to play a dual role in the initiator identity of N-formylmethionyl-tRNA by promoting its recognition by IF2 and preventing the misappropriation of this tRNA by the elongation apparatus. This Rhizobium leguminosarum bv. trifolii (strain WSM2304) protein is Methionyl-tRNA formyltransferase.